Consider the following 701-residue polypeptide: Sodium/hydrogen exchanger 6 (701 aa).

Helical transmembrane passes span S71–F91 and G103–P123. Residue N128 is glycosylated (N-linked (GlcNAc...) asparagine). 8 helical membrane-spanning segments follow: residues V176 to G196, I211 to Y231, C252 to H272, V278 to L298, I324 to V344, T372 to I392, F414 to F434, and F436 to G456. K475 is covalently cross-linked (Glycyl lysine isopeptide (Lys-Gly) (interchain with G-Cter in ubiquitin)). 2 helical membrane passes run N479–I499 and L515–C535.

The protein belongs to the monovalent cation:proton antiporter 1 (CPA1) transporter (TC 2.A.36) family. As to quaternary structure, homodimer. Interacts with RACK1; regulates the distribution of SLC9A6 between endosomes and the plasma membrane. In terms of processing, ubiquitinated (in vitro). Post-translationally, glycosylated. As to expression, ubiquitous. High expression in brain, skeletal muscle, and heart, but is also detected at lower levels in most other tissues.

It localises to the endosome membrane. Its subcellular location is the recycling endosome membrane. The protein localises to the early endosome membrane. The protein resides in the late endosome membrane. It is found in the cell membrane. The catalysed reaction is Na(+)(in) + H(+)(out) = Na(+)(out) + H(+)(in). It carries out the reaction K(+)(in) + H(+)(out) = K(+)(out) + H(+)(in). Functionally, endosomal Na(+), K(+)/H(+) antiporter. Mediates the electroneutral exchange of endosomal luminal H(+) for a cytosolic Na(+) or K(+). By facilitating proton efflux, SLC9A6 counteracts the acidity generated by vacuolar (V)-ATPase, thereby limiting luminal acidification. Responsible for alkalizing and maintaining the endosomal pH, and consequently in, e.g., endosome maturation and trafficking of recycling endosomal cargo. Plays a critical role during neurodevelopment by regulating synaptic development and plasticity. Implicated in the maintenance of cell polarity in a manner that is dependent on its ability to modulate intravesicular pH. Regulates intracelular pH in some specialized cells, osteoclasts and stereocilia where this transporter localizes to the plasma membrane. In Homo sapiens (Human), this protein is Sodium/hydrogen exchanger 6.